The following is a 375-amino-acid chain: GDP-mannose-dependent alpha-mannosyltransferase (375 aa).

Belongs to the glycosyltransferase group 1 family. Glycosyltransferase 4 subfamily.

The protein operates within phospholipid metabolism; phosphatidylinositol metabolism. Its function is as follows. Catalyzes the addition of a mannose residue from GDP-D-mannose to GlcAGroAc2 to generate 1,2-di-O-C16/C18:1-(alpha-D-mannopyranosyl)-(1-4)-(alpha-D-glucopyranosyluronic acid)-(1-3)-glycerol(ManGlcAGroAc2). In Mycolicibacterium smegmatis (strain ATCC 700084 / mc(2)155) (Mycobacterium smegmatis), this protein is GDP-mannose-dependent alpha-mannosyltransferase (mgtA).